The following is a 100-amino-acid chain: Large ribosomal subunit protein uL23 (100 aa).

The protein belongs to the universal ribosomal protein uL23 family. Part of the 50S ribosomal subunit. Contacts protein L29, and trigger factor when it is bound to the ribosome.

In terms of biological role, one of the early assembly proteins it binds 23S rRNA. One of the proteins that surrounds the polypeptide exit tunnel on the outside of the ribosome. Forms the main docking site for trigger factor binding to the ribosome. The chain is Large ribosomal subunit protein uL23 from Salmonella paratyphi A (strain ATCC 9150 / SARB42).